The following is a 196-amino-acid chain: Holliday junction branch migration complex subunit RuvA (196 aa).

The domain I stretch occupies residues 1–63 (MIEYIKGEIV…EDAHLLFGFA (63 aa)). Positions 64-142 (EKIERELFLL…PMESMAGNLP (79 aa)) are domain II. Residues 142 to 146 (PEASV) form a flexible linker region. The tract at residues 147-196 (SNGAVTEEAVAALVMLGFQKAASQKAVSAILKGSPTLAVEQVIKTALRML) is domain III.

Belongs to the RuvA family. In terms of assembly, homotetramer. Forms an RuvA(8)-RuvB(12)-Holliday junction (HJ) complex. HJ DNA is sandwiched between 2 RuvA tetramers; dsDNA enters through RuvA and exits via RuvB. An RuvB hexamer assembles on each DNA strand where it exits the tetramer. Each RuvB hexamer is contacted by two RuvA subunits (via domain III) on 2 adjacent RuvB subunits; this complex drives branch migration. In the full resolvosome a probable DNA-RuvA(4)-RuvB(12)-RuvC(2) complex forms which resolves the HJ.

The protein localises to the cytoplasm. In terms of biological role, the RuvA-RuvB-RuvC complex processes Holliday junction (HJ) DNA during genetic recombination and DNA repair, while the RuvA-RuvB complex plays an important role in the rescue of blocked DNA replication forks via replication fork reversal (RFR). RuvA specifically binds to HJ cruciform DNA, conferring on it an open structure. The RuvB hexamer acts as an ATP-dependent pump, pulling dsDNA into and through the RuvAB complex. HJ branch migration allows RuvC to scan DNA until it finds its consensus sequence, where it cleaves and resolves the cruciform DNA. This chain is Holliday junction branch migration complex subunit RuvA, found in Parabacteroides distasonis (strain ATCC 8503 / DSM 20701 / CIP 104284 / JCM 5825 / NCTC 11152).